We begin with the raw amino-acid sequence, 132 residues long: MKGIAGRQTRGLPLGANITCADNTGARSISLIDVKAWHGKARRIPAAGVGDMFMASVKKGTPEMRSKVVYAVVIRQKRPYRRPDGTMVQFEDNAAVLVTPDGEVRGSEIKGPVAREAAERWPRIAAIASIIV.

Belongs to the universal ribosomal protein uL14 family. Part of the 50S ribosomal subunit. Forms a cluster with proteins L3 and L24e, part of which may contact the 16S rRNA in 2 intersubunit bridges.

Binds to 23S rRNA. Forms part of two intersubunit bridges in the 70S ribosome. The protein is Large ribosomal subunit protein uL14 of Thermoplasma acidophilum (strain ATCC 25905 / DSM 1728 / JCM 9062 / NBRC 15155 / AMRC-C165).